The chain runs to 98 residues: NADH-ubiquinone oxidoreductase chain 4L (98 aa).

3 consecutive transmembrane segments (helical) span residues 1 to 21 (MSLV…GLLM), 29 to 49 (SLLC…IMIL), and 61 to 81 (IILL…LVMV).

The protein belongs to the complex I subunit 4L family. Core subunit of respiratory chain NADH dehydrogenase (Complex I) which is composed of 45 different subunits.

It is found in the mitochondrion inner membrane. The enzyme catalyses a ubiquinone + NADH + 5 H(+)(in) = a ubiquinol + NAD(+) + 4 H(+)(out). Its function is as follows. Core subunit of the mitochondrial membrane respiratory chain NADH dehydrogenase (Complex I) which catalyzes electron transfer from NADH through the respiratory chain, using ubiquinone as an electron acceptor. Part of the enzyme membrane arm which is embedded in the lipid bilayer and involved in proton translocation. The chain is NADH-ubiquinone oxidoreductase chain 4L (MT-ND4L) from Sorex unguiculatus (Long-clawed shrew).